Consider the following 455-residue polypeptide: Tubby-like F-box protein 1 (455 aa).

In terms of domain architecture, F-box spans 54–112; the sequence is ETPWANLPPELLRDVIKRLEESESVWPARRHVVACASVCRSWRDMCKEIVQSPELSGKI. Residues 386–414 are disordered; sequence QPQPQPQPQPQPQPLTQPQPSGQTDGPDK. Over residues 388–402 the composition is skewed to pro residues; it reads QPQPQPQPQPQPLTQ.

It belongs to the TUB family. In terms of tissue distribution, ubiquitous.

In Arabidopsis thaliana (Mouse-ear cress), this protein is Tubby-like F-box protein 1.